We begin with the raw amino-acid sequence, 318 residues long: MTNIVFMGTPAFAAPILEGIIENGYNVLAVVTQPDRPVGRKRVLHASPVKEVALKYGIKVFQPVKLSGSDEMQEIIDLQPDLIVTAAYGQFLPTKLIESVKIAAINVHGSLLPKYRGGAPVQYSIMNGDDKTGVTIIYMVKKMDAGDMLAQAELKIESTDDTGTIFEKMSILGRDVLLETLPKIISGNVEAVKQDENKVVFSPNIKPEEEILHLNLEAKEIDWKTRALRPAPGAYFKNFKGKRTKLWSIKPLEEKTEFAPGYVVNVDKHELKVSAYNGTVYSIIELQPAGKQKMDITSYLNGVGQGLKIGQRIIEDEE.

110 to 113 contacts (6S)-5,6,7,8-tetrahydrofolate; that stretch reads SLLP.

This sequence belongs to the Fmt family.

The catalysed reaction is L-methionyl-tRNA(fMet) + (6R)-10-formyltetrahydrofolate = N-formyl-L-methionyl-tRNA(fMet) + (6S)-5,6,7,8-tetrahydrofolate + H(+). Its function is as follows. Attaches a formyl group to the free amino group of methionyl-tRNA(fMet). The formyl group appears to play a dual role in the initiator identity of N-formylmethionyl-tRNA by promoting its recognition by IF2 and preventing the misappropriation of this tRNA by the elongation apparatus. The polypeptide is Methionyl-tRNA formyltransferase (Ligilactobacillus salivarius (strain UCC118) (Lactobacillus salivarius)).